The chain runs to 169 residues: Desumoylating isopeptidase 1 (169 aa).

The 143-residue stretch at 8 to 150 folds into the PPPDE domain; the sequence is HLVRLYVYDM…LGQALRPLLD (143 aa). Residue His39 is part of the active site. The short motif at 84–92 is the Nuclear export signal 1 element; the sequence is IFLEYLSSL. Cys109 is an active-site residue. A Nuclear export signal 2 motif is present at residues 140–154; sequence PLGQALRPLLDSVQI.

The protein belongs to the DeSI family. In terms of assembly, homodimer.

It is found in the cytoplasm. Its subcellular location is the nucleus. The catalysed reaction is S-hexadecanoyl-L-cysteinyl-[protein] + H2O = L-cysteinyl-[protein] + hexadecanoate + H(+). In terms of biological role, protease which deconjugates SUMO1, SUMO2 and SUMO3 from some substrate proteins. Has isopeptidase but not SUMO-processing activity. Collaborates with ubqln4 in the export of ubiquitinated proteins from the nucleus to the cytoplasm. Exhibits palmitoyl protein thioesterase (S-depalmitoylation) activity towards synthetic substrates 4-methylumbelliferyl-6-S-palmitoyl-beta-D-glucopyranoside and S-depalmitoylation probe 5 (DPP-5). The chain is Desumoylating isopeptidase 1 from Xenopus laevis (African clawed frog).